The following is a 417-amino-acid chain: Putative UDP-arabinose 4-epimerase 2 (417 aa).

Residues 1 to 31 are Cytoplasmic-facing; it reads MLNLGRARTGRQNRSMSFEGLDFADPKKNNN. The chain crosses the membrane as a helical; Signal-anchor for type II membrane protein span at residues 32 to 54; it reads YMGKIVLVMTLTAMCILLLNQSP. Residues 55 to 417 lie on the Lumenal side of the membrane; it reads TFNTPSVFSR…YGSSSLVSAY (363 aa). Position 71–102 (71–102) interacts with NAD(+); the sequence is HVLVTGGAGYIGSHAALRLLKDSYRVTIVDNL. Catalysis depends on Tyr219, which acts as the Proton acceptor.

Belongs to the NAD(P)-dependent epimerase/dehydratase family. NAD(+) is required as a cofactor.

The protein localises to the golgi apparatus. Its subcellular location is the golgi stack membrane. It catalyses the reaction UDP-beta-L-arabinopyranose = UDP-alpha-D-xylose. It participates in nucleotide-sugar biosynthesis; UDP-L-arabinose biosynthesis; UDP-L-arabinose from UDP-alpha-D-xylose: step 1/1. It functions in the pathway cell wall biogenesis; cell wall polysaccharide biosynthesis. This Arabidopsis thaliana (Mouse-ear cress) protein is Putative UDP-arabinose 4-epimerase 2.